A 454-amino-acid polypeptide reads, in one-letter code: uncharacterized protein (454 aa).

An N-terminal signal peptide occupies residues 1–21; it reads MKYKTVKSIPLFLLGSIVFTA. Cys22 carries N-palmitoyl cysteine lipidation. Cys22 is lipidated: S-diacylglycerol cysteine. Over residues 55-64 the composition is skewed to low complexity; sequence ASSSSSTTTS. The disordered stretch occupies residues 55-87; sequence ASSSSSTTTSNDDNNQKGYFLETNRSTGTYDPN. The span at 65–87 shows a compositional bias: polar residues; sequence NDDNNQKGYFLETNRSTGTYDPN.

The protein localises to the cell membrane. This is an uncharacterized protein from Mycoplasma pneumoniae (strain ATCC 29342 / M129 / Subtype 1) (Mycoplasmoides pneumoniae).